The primary structure comprises 103 residues: Acylphosphatase-2 (103 aa).

Serine 2 carries the post-translational modification N-acetylserine. An Acylphosphatase-like domain is found at 13-103; sequence SVDYEVFGRV…LDFSGFSTRY (91 aa). Active-site residues include arginine 28 and asparagine 46.

It belongs to the acylphosphatase family.

The catalysed reaction is an acyl phosphate + H2O = a carboxylate + phosphate + H(+). Functionally, its physiological role is not yet clear. This is Acylphosphatase-2 (ACYP2) from Anas platyrhynchos (Mallard).